A 253-amino-acid chain; its full sequence is Tetraspanin-11 (253 aa).

The next 3 helical transmembrane spans lie at 19–39 (LLFIFNFFFWVGGAAVMAVGI), 63–83 (ILIFVGGLVMTTGFLGFGAII), and 93–113 (YFCLLLVIFLVELVAGVLAHV). Residue asparagine 127 is glycosylated (N-linked (GlcNAc...) asparagine). A helical transmembrane segment spans residues 220–240 (LLLMGAVGIGVACLQICGMVL).

This sequence belongs to the tetraspanin (TM4SF) family.

It localises to the membrane. The sequence is that of Tetraspanin-11 (Tspan11) from Mus musculus (Mouse).